A 230-amino-acid chain; its full sequence is MILNARPEPIAFPTSASALIVVDMQNAYASEGGYLDLAGFDVSATAPIITNIKRAITAARAAGIQVIFFQNGWDPQYVEAGGEGSPNWHKSNALKTMRKQPELMGKLLAKGDWDYALVDELQPQAGDIVIAKPRYSGFFNTQLDSILRAKGIHHLIFTGIATNVCVESTLRDGFFFEYFGVVLEDATHQAGPDFAQKAALYNIETFFGWVSDVETFCNCIAPSAQLSQSA.

The Proton acceptor role is filled by Asp23. The active site involves Lys132. Cys165 functions as the Nucleophile in the catalytic mechanism.

Belongs to the isochorismatase family. RutB subfamily.

It catalyses the reaction (Z)-3-ureidoacrylate + H2O + H(+) = (Z)-3-aminoacrylate + NH4(+) + CO2. It carries out the reaction (Z)-3-ureidoacrylate + H2O = (Z)-3-aminoacrylate + carbamate + H(+). The enzyme catalyses (Z)-2-methylureidoacrylate + H2O + H(+) = (Z)-2-methylaminoacrylate + NH4(+) + CO2. Hydrolyzes ureidoacrylate to form aminoacrylate and carbamate. The carbamate hydrolyzes spontaneously, thereby releasing one of the nitrogen atoms of the pyrimidine ring as ammonia and one of its carbon atoms as CO2. In Yersinia enterocolitica serotype O:8 / biotype 1B (strain NCTC 13174 / 8081), this protein is Ureidoacrylate amidohydrolase RutB.